Consider the following 1761-residue polypeptide: Nonribosomal peptide synthetase 6 (1761 aa).

The segment at 63–468 is adenylation; it reads ERAALHPEKI…GRQDQQVKLR (406 aa). In terms of domain architecture, Carrier 1 spans 600-675; sequence EATTEMELKL…AMAEKAKPVS (76 aa). Ser-636 is modified (O-(pantetheine 4'-phosphoryl)serine). Residues 712–1135 form a condensation 1 region; it reads VEDVYPCTPL…AVLDPAEARD (424 aa). Carrier domains are found at residues 1169–1242 and 1237–1313; these read SPNE…SNER and SASN…EEEM. O-(pantetheine 4'-phosphoryl)serine is present on residues Ser-1203 and Ser-1274. The condensation 2 stretch occupies residues 1354–1677; sequence IYPTRPLQQL…DKVQWFDTVV (324 aa).

The protein belongs to the NRP synthetase family.

It participates in siderophore biosynthesis. NRPS involved in extracellular coprogen-type siderophores biosynthesis including coprogen, neocoprogen I and neocoprogen II. The role of extracellular siderophores in fungal virulence to plants is to supply iron to the fungus during plant infection, but not to act as phytotoxins, depriving their hosts of iron. This is Nonribosomal peptide synthetase 6 from Cochliobolus miyabeanus (Brown spot disease fungus).